Here is a 227-residue protein sequence, read N- to C-terminus: Cytochrome c oxidase subunit 2 (227 aa).

Topologically, residues 1-14 are mitochondrial intermembrane; it reads MAYPFQLGLQDATS. The chain crosses the membrane as a helical span at residues 15-45; sequence PIMEELTNFHDHTLMIVFLISSLVLYIISLM. The Mitochondrial matrix portion of the chain corresponds to 46–59; it reads LTTKLTHTSTMDAQ. Residues 60 to 87 form a helical membrane-spanning segment; the sequence is EVETIWTILPAVILILIALPSLRILYMM. Topologically, residues 88-227 are mitochondrial intermembrane; the sequence is DEINNPVLTV…HFENWSTSMI (140 aa). His-161, Cys-196, Glu-198, Cys-200, His-204, and Met-207 together coordinate Cu cation. Mg(2+) is bound at residue Glu-198.

It belongs to the cytochrome c oxidase subunit 2 family. In terms of assembly, component of the cytochrome c oxidase (complex IV, CIV), a multisubunit enzyme composed of 14 subunits. The complex is composed of a catalytic core of 3 subunits MT-CO1, MT-CO2 and MT-CO3, encoded in the mitochondrial DNA, and 11 supernumerary subunits COX4I, COX5A, COX5B, COX6A, COX6B, COX6C, COX7A, COX7B, COX7C, COX8 and NDUFA4, which are encoded in the nuclear genome. The complex exists as a monomer or a dimer and forms supercomplexes (SCs) in the inner mitochondrial membrane with NADH-ubiquinone oxidoreductase (complex I, CI) and ubiquinol-cytochrome c oxidoreductase (cytochrome b-c1 complex, complex III, CIII), resulting in different assemblies (supercomplex SCI(1)III(2)IV(1) and megacomplex MCI(2)III(2)IV(2)). Found in a complex with TMEM177, COA6, COX18, COX20, SCO1 and SCO2. Interacts with TMEM177 in a COX20-dependent manner. Interacts with COX20. Interacts with COX16. Cu cation is required as a cofactor.

The protein resides in the mitochondrion inner membrane. The enzyme catalyses 4 Fe(II)-[cytochrome c] + O2 + 8 H(+)(in) = 4 Fe(III)-[cytochrome c] + 2 H2O + 4 H(+)(out). Functionally, component of the cytochrome c oxidase, the last enzyme in the mitochondrial electron transport chain which drives oxidative phosphorylation. The respiratory chain contains 3 multisubunit complexes succinate dehydrogenase (complex II, CII), ubiquinol-cytochrome c oxidoreductase (cytochrome b-c1 complex, complex III, CIII) and cytochrome c oxidase (complex IV, CIV), that cooperate to transfer electrons derived from NADH and succinate to molecular oxygen, creating an electrochemical gradient over the inner membrane that drives transmembrane transport and the ATP synthase. Cytochrome c oxidase is the component of the respiratory chain that catalyzes the reduction of oxygen to water. Electrons originating from reduced cytochrome c in the intermembrane space (IMS) are transferred via the dinuclear copper A center (CU(A)) of subunit 2 and heme A of subunit 1 to the active site in subunit 1, a binuclear center (BNC) formed by heme A3 and copper B (CU(B)). The BNC reduces molecular oxygen to 2 water molecules using 4 electrons from cytochrome c in the IMS and 4 protons from the mitochondrial matrix. In Praomys taitae (Taita hill rat), this protein is Cytochrome c oxidase subunit 2 (MT-CO2).